Here is a 215-residue protein sequence, read N- to C-terminus: Outer-membrane lipoprotein LolB (215 aa).

Residues 1–21 form the signal peptide; the sequence is MLIPKKYYLLIILLSNCLLAS. Residue Cys22 is the site of N-palmitoyl cysteine attachment. Cys22 carries S-diacylglycerol cysteine lipidation.

The protein belongs to the LolB family. Monomer.

Its subcellular location is the cell outer membrane. In terms of biological role, plays a critical role in the incorporation of lipoproteins in the outer membrane after they are released by the LolA protein. The polypeptide is Outer-membrane lipoprotein LolB (Baumannia cicadellinicola subsp. Homalodisca coagulata).